Consider the following 197-residue polypeptide: Protein GrpE (197 aa).

The disordered stretch occupies residues Met1–Glu43.

Belongs to the GrpE family. Homodimer.

The protein resides in the cytoplasm. Its function is as follows. Participates actively in the response to hyperosmotic and heat shock by preventing the aggregation of stress-denatured proteins, in association with DnaK and GrpE. It is the nucleotide exchange factor for DnaK and may function as a thermosensor. Unfolded proteins bind initially to DnaJ; upon interaction with the DnaJ-bound protein, DnaK hydrolyzes its bound ATP, resulting in the formation of a stable complex. GrpE releases ADP from DnaK; ATP binding to DnaK triggers the release of the substrate protein, thus completing the reaction cycle. Several rounds of ATP-dependent interactions between DnaJ, DnaK and GrpE are required for fully efficient folding. The chain is Protein GrpE from Cronobacter sakazakii (strain ATCC BAA-894) (Enterobacter sakazakii).